The primary structure comprises 465 residues: Branchpoint-bridging protein (465 aa).

Residues Met1 to Arg11 show a composition bias toward basic and acidic residues. The interval Met1–Ser22 is disordered. The KH domain maps to Tyr139 to Ile205. CCHC-type zinc fingers lie at residues Arg257–His274 and Ile282–Ser299. Disordered stretches follow at residues Ala324–Gln391 and Ile431–Asn465. Composition is skewed to polar residues over residues Arg339 to Ala361 and Gln377 to Gln391.

The protein belongs to the BBP/SF1 family.

The protein localises to the nucleus. Necessary for the splicing of pre-mRNA. Has a role in the recognition of the branch site (5'-UACUAAC-3'), the pyrimidine tract and the 3'-splice site at the 3'-end of introns. The protein is Branchpoint-bridging protein (BBP) of Candida glabrata (strain ATCC 2001 / BCRC 20586 / JCM 3761 / NBRC 0622 / NRRL Y-65 / CBS 138) (Yeast).